Reading from the N-terminus, the 349-residue chain is N-acetyl-gamma-glutamyl-phosphate reductase (349 aa).

The active site involves Cys-152.

The protein belongs to the NAGSA dehydrogenase family. Type 1 subfamily.

The protein localises to the cytoplasm. It carries out the reaction N-acetyl-L-glutamate 5-semialdehyde + phosphate + NADP(+) = N-acetyl-L-glutamyl 5-phosphate + NADPH + H(+). It participates in amino-acid biosynthesis; L-arginine biosynthesis; N(2)-acetyl-L-ornithine from L-glutamate: step 3/4. In terms of biological role, catalyzes the NADPH-dependent reduction of N-acetyl-5-glutamyl phosphate to yield N-acetyl-L-glutamate 5-semialdehyde. This Clavibacter sepedonicus (Clavibacter michiganensis subsp. sepedonicus) protein is N-acetyl-gamma-glutamyl-phosphate reductase.